Reading from the N-terminus, the 1242-residue chain is MPKTLTESEVEATFAKLKAADPDRKVDIIQFFGLQLEDVEELPASVIDPFLLILPPLIRSPHSLLLSSVLSSFLPYFLPLIPKHPTTHLRLALLQVLPALLEKLNDAKERIHSAAGNAIVILGELSWEAEPPIPASNLNSSGSLKAGSLSSSTATKSKPHETLPHLWERHLKDVLQGKAWRSKVEGMKVLTKMRSKEGAKMGLKAWLGVLVDLLEDGDGNVRDQARETVVELLSPPSTPPAARSEFKRLLVARNVRKTIADDIITRILSGEGSDRSTPAVMNSELGKEEGASRSGAAAPAHSQADDVDIVYVASPQDLEREFHSMLPFFEGKETEENWAPRERSIVRIRGMMKGQAHVKYQAAFIAGLKGGIVLSLRTTVAQQSCYLLKELPEGLGAAFDNFVEFLLPILGKMSGFTKKLIADRSQTAVTSIITHTTVHPRIFINHISSGIQEKNVQIRAYSVNHLKTFLIVHASHAKHQIEATPGLSDTLDAAFRKALADVNPGVREVTRQAFWRYHEVWRSKAEVLMNSLDGQARKQLEKANPRTAASPMPSYASSSSTGAPSSANTKPPSKKMDLKAMLAERRRAVKEAGKQAQETNAGSPRVVSNPVFASPGVQHASITGLPRSSSAVGIARHVETSSPSPVRSPTPSSSATRIRPSPSPERIQSPIQTKIEIDSPLRSRYTSLTPDLARSPPKSPSPSLSPSLGLGESPLRQVLTYPAANGRHSVGEGKRAIPELVEVADNGAEHEVDELTLKEGQKTRDDGNTDQELPPTVQEEVDQVEQSQQFESEPRLEHPEPQQGNTFSTSTSGRVPSTPARSIATGTTASLPNSRNGNIKGEKIISSRLNPEAFQTPLNPKTSALRSSSAIRTPAWKDSPRPEAVTPQMMQKLKERRHERSWWVKRQELLEKASPLKPLTPSPSFAILPDIEALELGAPTLKNLQKIALFCSSHPVRPEPTAEQDEEEKRAFEEEKRVWTGLFDRVMNGVVDFLRPDKDKELLEQGLVVLWEIVQHQWPLVDDTQRLCHGLFRLRESSDAVVLESTNALISLLVQISDPMLLLCNLRSSLDRFLTKHPAPPSSSADNSDPMTSALSQLSLSSSKESPEKRTRNSGYLFGLTSIGMCVLRLSAPVIVSEGPKLGQIVMEAINDPSSIIRQAAHSLLLAIQCVTHDSRKTLAFVPAMSQGQKDLAVYYMAQNGVLEQIGLHKKATSEGEKGREGDRDNMTGELAGLMSRGVIRE.

Composition is skewed to low complexity over residues Leu-138 to Lys-156 and Ala-548 to Ala-567. Disordered stretches follow at residues Leu-138–Glu-161, Lys-538–Phe-612, His-637–Gly-711, Ala-748–Ile-839, Ala-853–Ala-884, and His-1077–Thr-1111. Positions Lys-574–Gly-593 are enriched in basic and acidic residues. Composition is skewed to low complexity over residues Thr-640–Pro-660 and Ser-701–Gly-711. Basic and acidic residues predominate over residues Ala-748–Gly-767. Polar residues-rich tracts occupy residues Gln-802–Val-815, Ala-824–Gly-837, and Thr-856–Ile-871. Residues Ser-1082–Lys-1104 show a composition bias toward low complexity.

It belongs to the CLASP family. In terms of assembly, interacts with microtubules.

Its subcellular location is the cytoplasm. The protein resides in the cytoskeleton. The protein localises to the nucleus. It localises to the spindle. Functionally, microtubule binding protein that promotes the stabilization of dynamic microtubules. Required for mitotic spindle formation. This chain is Protein STU1 (STU1), found in Cryptococcus neoformans var. neoformans serotype D (strain B-3501A) (Filobasidiella neoformans).